The chain runs to 286 residues: Meteorin-like protein (286 aa).

Positions methionine 1–serine 21 are cleaved as a signal peptide. Disulfide bonds link cysteine 28/cysteine 51, cysteine 84/cysteine 120, cysteine 165/cysteine 235, cysteine 168/cysteine 259, and cysteine 178/cysteine 281.

Belongs to the meteorin family.

Its subcellular location is the secreted. In terms of biological role, hormone induced following exercise or cold exposure that promotes energy expenditure. Induced either in the skeletal muscle after exercise or in adipose tissue following cold exposure and is present in the circulation. Able to stimulate energy expenditure associated with the browning of the white fat depots and improves glucose tolerance. The polypeptide is Meteorin-like protein (metrnl) (Danio rerio (Zebrafish)).